Consider the following 316-residue polypeptide: Transaldolase (316 aa).

The active-site Schiff-base intermediate with substrate is the K132.

This sequence belongs to the transaldolase family. Type 1 subfamily. In terms of assembly, homodimer.

The protein localises to the cytoplasm. The catalysed reaction is D-sedoheptulose 7-phosphate + D-glyceraldehyde 3-phosphate = D-erythrose 4-phosphate + beta-D-fructose 6-phosphate. It participates in carbohydrate degradation; pentose phosphate pathway; D-glyceraldehyde 3-phosphate and beta-D-fructose 6-phosphate from D-ribose 5-phosphate and D-xylulose 5-phosphate (non-oxidative stage): step 2/3. Its function is as follows. Transaldolase is important for the balance of metabolites in the pentose-phosphate pathway. In Vibrio cholerae serotype O1 (strain ATCC 39541 / Classical Ogawa 395 / O395), this protein is Transaldolase.